The following is a 61-amino-acid chain: Potassium channel toxin alpha-KTx 6.7 (61 aa).

The N-terminal stretch at 1-23 (MNAKFILLLLVVTTTMLLPDTQG) is a signal peptide. Disulfide bonds link Cys-29–Cys-50, Cys-35–Cys-55, Cys-39–Cys-57, and Cys-45–Cys-60. Cysteine amide is present on Cys-60.

This sequence belongs to the short scorpion toxin superfamily. Potassium channel inhibitor family. Alpha-KTx 06 subfamily. In terms of tissue distribution, expressed by the venom gland.

The protein resides in the secreted. Functionally, blocker of voltage-gated potassium channels. This chain is Potassium channel toxin alpha-KTx 6.7, found in Opistophthalmus carinatus (African yellow leg scorpion).